The primary structure comprises 1279 residues: ATP-dependent helicase/nuclease subunit A (1279 aa).

The 496-residue stretch at 4–499 folds into the UvrD-like helicase ATP-binding domain; the sequence is TKWTDEQRQA…VKLFKNFRSR (496 aa). 25–32 serves as a coordination point for ATP; it reads AGAGAGKT. The UvrD-like helicase C-terminal domain occupies 526–853; that stretch reads EEALKVGASY…RIMSIHKSKG (328 aa).

The protein belongs to the helicase family. AddA subfamily. As to quaternary structure, heterodimer of AddA and AddB/RexB. It depends on Mg(2+) as a cofactor.

The catalysed reaction is Couples ATP hydrolysis with the unwinding of duplex DNA by translocating in the 3'-5' direction.. The enzyme catalyses ATP + H2O = ADP + phosphate + H(+). The heterodimer acts as both an ATP-dependent DNA helicase and an ATP-dependent, dual-direction single-stranded exonuclease. Recognizes the chi site generating a DNA molecule suitable for the initiation of homologous recombination. The AddA nuclease domain is required for chi fragment generation; this subunit has the helicase and 3' -&gt; 5' nuclease activities. This is ATP-dependent helicase/nuclease subunit A from Clostridium botulinum (strain ATCC 19397 / Type A).